The chain runs to 391 residues: Na(+)/H(+) antiporter NhaA (391 aa).

A run of 11 helical transmembrane segments spans residues alanine 14–leucine 34, leucine 59–valine 79, serine 95–phenylalanine 115, valine 124–leucine 144, valine 154–phenylalanine 174, threonine 177–leucine 197, isoleucine 213–isoleucine 233, phenylalanine 261–phenylalanine 281, proline 287–phenylalanine 307, isoleucine 328–leucine 348, and isoleucine 363–valine 383.

The protein belongs to the NhaA Na(+)/H(+) (TC 2.A.33) antiporter family.

The protein resides in the cell inner membrane. It catalyses the reaction Na(+)(in) + 2 H(+)(out) = Na(+)(out) + 2 H(+)(in). Functionally, na(+)/H(+) antiporter that extrudes sodium in exchange for external protons. This is Na(+)/H(+) antiporter NhaA from Shewanella amazonensis (strain ATCC BAA-1098 / SB2B).